We begin with the raw amino-acid sequence, 466 residues long: Tyrosinase HcTyr1 (466 aa).

The Cu cation site is built by His43, His78, His87, His211, His215, and His238.

This sequence belongs to the tyrosinase family. Monomer. Formation of a dimer is observed when the protein is in its holo-form. Requires Cu(2+) as cofactor. In vitro, the C-terminal lid-domain is slowly cleaved off in an autoprocessive time dependent manner, leading to the formation of cleaved-HcTyr1. The processing rate is not influenced by factors such as pH and added metal ions.

The enzyme catalyses L-tyrosine + O2 = L-dopaquinone + H2O. The catalysed reaction is 2 L-tyrosine + O2 = 2 L-dopa. It carries out the reaction 2 L-dopa + O2 = 2 L-dopaquinone + 2 H2O. With respect to regulation, cleavage of the lid-domain increases activity levels, affinity for substrate and turnover rate. Exhibits high saline tolerance. Copper-containing oxidase that catalyzes the conversion of L-tyrosine to L-dopa and then to L-dopaquinone. Can use various phenols such as p-coumaric acid, phenol, pyrocatechol, syringol or pyrogallol. Accepts several of the constituents of lignin and potentially participates in lignin functionalization. This Hahella sp. (strain CCB-MM4) protein is Tyrosinase HcTyr1.